The following is a 209-amino-acid chain: Large ribosomal subunit protein uL1 (209 aa).

The protein belongs to the universal ribosomal protein uL1 family. In terms of assembly, part of the 50S ribosomal subunit.

In terms of biological role, binds directly to 23S rRNA. The L1 stalk is quite mobile in the ribosome, and is involved in E site tRNA release. Functionally, protein L1 is also a translational repressor protein, it controls the translation of the L11 operon by binding to its mRNA. The sequence is that of Large ribosomal subunit protein uL1 (rplA) from Neorickettsia sennetsu (strain ATCC VR-367 / Miyayama) (Ehrlichia sennetsu).